A 476-amino-acid chain; its full sequence is Zinc metalloproteinase/disintegrin (476 aa).

Residues 1 to 20 form the signal peptide; it reads MIQVLLVTICLAAFPYQGSS. Residues 21–192 constitute a propeptide that is removed on maturation; it reads IILESGNVND…ASQSNLTPEQ (172 aa). The residue at position 193 (Gln-193) is a Pyrrolidone carboxylic acid. Positions 198-393 constitute a Peptidase M12B domain; it reads RYIELAVVAD…HNPQCILNKP (196 aa). The Ca(2+) site is built by Glu-201 and Asp-285. Intrachain disulfides connect Cys-309-Cys-388, Cys-348-Cys-372, and Cys-350-Cys-355. His-334 is a Zn(2+) binding site. Glu-335 is a catalytic residue. Residues His-338 and His-344 each coordinate Zn(2+). 2 residues coordinate Ca(2+): Cys-388 and Asn-391. Positions 394–403 are excised as a propeptide; that stretch reads LTTVSGNELL. Positions 395-476 constitute a Disintegrin domain; sequence TTVSGNELLE…ADCPRNRFHA (82 aa). 6 disulfide bridges follow: Cys-409–Cys-424, Cys-411–Cys-419, Cys-418–Cys-441, Cys-432–Cys-438, Cys-437–Cys-462, and Cys-450–Cys-469. A Cell attachment site motif is present at residues 454-456; sequence RGD.

Belongs to the venom metalloproteinase (M12B) family. P-II subfamily. P-IIa sub-subfamily. In terms of assembly, monomer (metalloprotease). Zn(2+) serves as cofactor. The N-terminus is blocked. In terms of processing, not glycosylated. Expressed by the venom gland.

It is found in the secreted. Its activity is regulated as follows. Inhibited by EDTA, and 1,10-phenanthroline, but not by PMSF. Non-hemorrhagic proteinase that activates prothrombin (F2) calcium-independently. Activates factor X (F10) and hydrolyzes the Aalpha-chain and more slowly the Bbeta-chain of fibrin and fibrinogen without affecting the gamma chain. It induces neither detachment nor apoptosis of human endothelial cells and is also not able to trigger an endothelial pro-inflammatory cell response. Nitric oxide and prostacyclin levels released by endothelial cells are significantly increased after treatment with insularinase A. Its function is as follows. Inhibits ADP-induced platelet aggregation (IC(50)=0.8 uM for native protein). Interestingly, inhibits the adhesion of HUVECs to immobilized fibrinogen at very low concentrations (IC(50)=36 nM). The polypeptide is Zinc metalloproteinase/disintegrin (Bothrops insularis (Golden lancehead)).